The chain runs to 688 residues: DNA-directed RNA polymerase subunit beta' (688 aa).

Zn(2+) contacts are provided by Cys-69, Cys-71, Cys-87, and Cys-90. 3 residues coordinate Mg(2+): Asp-497, Asp-499, and Asp-501.

Belongs to the RNA polymerase beta' chain family. RpoC1 subfamily. In plastids the minimal PEP RNA polymerase catalytic core is composed of four subunits: alpha, beta, beta', and beta''. When a (nuclear-encoded) sigma factor is associated with the core the holoenzyme is formed, which can initiate transcription. Mg(2+) serves as cofactor. The cofactor is Zn(2+).

The protein resides in the plastid. Its subcellular location is the chloroplast. The enzyme catalyses RNA(n) + a ribonucleoside 5'-triphosphate = RNA(n+1) + diphosphate. Its function is as follows. DNA-dependent RNA polymerase catalyzes the transcription of DNA into RNA using the four ribonucleoside triphosphates as substrates. The sequence is that of DNA-directed RNA polymerase subunit beta' from Sinapis alba (White mustard).